The sequence spans 130 residues: Ribonuclease P protein component (130 aa).

It belongs to the RnpA family. As to quaternary structure, consists of a catalytic RNA component (M1 or rnpB) and a protein subunit.

The catalysed reaction is Endonucleolytic cleavage of RNA, removing 5'-extranucleotides from tRNA precursor.. In terms of biological role, RNaseP catalyzes the removal of the 5'-leader sequence from pre-tRNA to produce the mature 5'-terminus. It can also cleave other RNA substrates such as 4.5S RNA. The protein component plays an auxiliary but essential role in vivo by binding to the 5'-leader sequence and broadening the substrate specificity of the ribozyme. The chain is Ribonuclease P protein component from Psychrobacter sp. (strain PRwf-1).